Here is a 234-residue protein sequence, read N- to C-terminus: Sugar fermentation stimulation protein A (234 aa).

Residues Leu-201–Ser-220 constitute a DNA-binding region (H-T-H motif).

Belongs to the SfsA family.

In terms of biological role, binds to DNA non-specifically. Could be a regulatory factor involved in maltose metabolism. This Escherichia coli O7:K1 (strain IAI39 / ExPEC) protein is Sugar fermentation stimulation protein A.